A 582-amino-acid polypeptide reads, in one-letter code: ATP-dependent lipid A-core flippase (582 aa).

The next 6 membrane-spanning stretches (helical) occupy residues 23-43 (AAFI…TLFL), 61-81 (ILLY…SLNV), 140-160 (AVLV…LMFY), 163-183 (WQLS…VGVV), 247-267 (AIST…VLVI), and 273-293 (MLGE…IMLL). Positions 26 to 308 (IAAILCMIGY…LTNVNSDFQR (283 aa)) constitute an ABC transmembrane type-1 domain. The ABC transporter domain maps to 340 to 576 (IVFDDVTFSY…EGAYFQLHNL (237 aa)). 374 to 381 (GRSGSGKS) contributes to the ATP binding site.

The protein belongs to the ABC transporter superfamily. Lipid exporter (TC 3.A.1.106) family. Homodimer.

Its subcellular location is the cell inner membrane. The catalysed reaction is ATP + H2O + lipid A-core oligosaccharideSide 1 = ADP + phosphate + lipid A-core oligosaccharideSide 2.. Functionally, involved in lipopolysaccharide (LPS) biosynthesis. Translocates lipid A-core from the inner to the outer leaflet of the inner membrane. Transmembrane domains (TMD) form a pore in the inner membrane and the ATP-binding domain (NBD) is responsible for energy generation. In Idiomarina loihiensis (strain ATCC BAA-735 / DSM 15497 / L2-TR), this protein is ATP-dependent lipid A-core flippase.